A 218-amino-acid chain; its full sequence is UPF0502 protein Mmwyl1_3509 (218 aa).

Belongs to the UPF0502 family.

This chain is UPF0502 protein Mmwyl1_3509, found in Marinomonas sp. (strain MWYL1).